A 32-amino-acid chain; its full sequence is Delta-conotoxin-like CnVIC (32 aa).

Disulfide bonds link cysteine 3/cysteine 18, cysteine 10/cysteine 22, and cysteine 17/cysteine 27. Residues proline 6 and proline 14 each carry the 4-hydroxyproline modification.

It belongs to the conotoxin O1 superfamily. In terms of tissue distribution, expressed by the venom duct.

Its subcellular location is the secreted. Its function is as follows. Delta-conotoxins bind to site 6 of voltage-gated sodium channels (Nav) and inhibit the inactivation process. This toxin acts on Nav1.2/SCN2A, Nav1.4/SCN4A, Nav1.5/SCN5A (weak activity), Nav1.6/SCN8A (EC(50)=2.5 uM). This Conus consors (Singed cone) protein is Delta-conotoxin-like CnVIC.